The sequence spans 83 residues: UPF0248 protein PYRAB10580 (83 aa).

Belongs to the UPF0248 family.

This chain is UPF0248 protein PYRAB10580, found in Pyrococcus abyssi (strain GE5 / Orsay).